Consider the following 1462-residue polypeptide: DNA polymerase III PolC-type (1462 aa).

The Exonuclease domain occupies 424–580; the sequence is YVVFDVETTG…YDAEATGRLL (157 aa).

This sequence belongs to the DNA polymerase type-C family. PolC subfamily.

It localises to the cytoplasm. It catalyses the reaction DNA(n) + a 2'-deoxyribonucleoside 5'-triphosphate = DNA(n+1) + diphosphate. Its function is as follows. Required for replicative DNA synthesis. This DNA polymerase also exhibits 3' to 5' exonuclease activity. This Streptococcus sanguinis (strain SK36) protein is DNA polymerase III PolC-type.